The sequence spans 334 residues: uncharacterized protein (334 aa).

It belongs to the PAPS reductase family.

This is an uncharacterized protein from Escherichia phage 186 (Bacteriophage 186).